A 158-amino-acid polypeptide reads, in one-letter code: SUMO-conjugating enzyme UBC9 (158 aa).

The UBC core domain occupies 4 to 157; the sequence is IALSRLAQER…VRAQAKKFSP (154 aa). The tract at residues 13–18 is interaction with sumo1; it reads RKAWRK. Catalysis depends on cysteine 93, which acts as the Glycyl thioester intermediate.

It belongs to the ubiquitin-conjugating enzyme family. In terms of assembly, forms a tight complex with RANGAP1 and RANBP2.

The protein localises to the nucleus. Its pathway is protein modification; protein sumoylation. Accepts the ubiquitin-like proteins SUMO1, SUMO2 and SUMO3 from the UBLE1A-UBLE1B E1 complex and catalyzes their covalent attachment to other proteins with the help of an E3 ligase such as RANBP2 or CBX4. Essential for nuclear architecture and chromosome segregation. The chain is SUMO-conjugating enzyme UBC9 (ube2i) from Pagrus major (Red sea bream).